We begin with the raw amino-acid sequence, 437 residues long: Major royal jelly protein 6 (437 aa).

An N-terminal signal peptide occupies residues 1–20 (MTNWLLLIVCLSIACQDVTS). Asn-78, Asn-164, Asn-181, Asn-201, and Asn-324 each carry an N-linked (GlcNAc...) asparagine glycan.

This sequence belongs to the major royal jelly protein family. As to expression, found in and secreted from the hypopharyngeal glands of the worker honey bee (at protein level); expression peaks at 20 days post eclosion. Expressed in the spermatheca of adult queen bees (at protein level); Expression levels are higher in mated queens than in virgin queens. Expressed at low level in the brains of adult worker bees. Protein abundance does not seem to correlate with transcript abundance.

It is found in the secreted. In terms of biological role, component of royal jelly, a substance produced in the hypopharyngeal gland containing proteins, free amino acids, fatty acids, sugars and other nutrients, which is fed to developing larvae by worker nurse bees. All larvae are fed some royal jelly (also known as worker jelly) early in their development but it forms the principal source of nutrition for larvae destined to become queen bees. Produced in the spermatheca of adult queen bees, along with other major royal jelly proteins, where it may act as a nutrient supply for sperm stored by mated queens, or be involved in energy metabolism. The protein is Major royal jelly protein 6 of Apis mellifera (Honeybee).